A 621-amino-acid polypeptide reads, in one-letter code: Chaperone protein HscA homolog (621 aa).

This sequence belongs to the heat shock protein 70 family.

Its function is as follows. Chaperone involved in the maturation of iron-sulfur cluster-containing proteins. Has a low intrinsic ATPase activity which is markedly stimulated by HscB. The sequence is that of Chaperone protein HscA homolog from Cupriavidus taiwanensis (strain DSM 17343 / BCRC 17206 / CCUG 44338 / CIP 107171 / LMG 19424 / R1) (Ralstonia taiwanensis (strain LMG 19424)).